The primary structure comprises 251 residues: SPbeta prophage-derived putative antirepressor protein YoqD (251 aa).

This Bacillus subtilis (strain 168) protein is SPbeta prophage-derived putative antirepressor protein YoqD (yoqD).